The following is a 121-amino-acid chain: Large ribosomal subunit protein bL20 (121 aa).

Belongs to the bacterial ribosomal protein bL20 family.

Its function is as follows. Binds directly to 23S ribosomal RNA and is necessary for the in vitro assembly process of the 50S ribosomal subunit. It is not involved in the protein synthesizing functions of that subunit. The sequence is that of Large ribosomal subunit protein bL20 (rplT) from Chlamydia pneumoniae (Chlamydophila pneumoniae).